The primary structure comprises 50 residues: Defensin-like protein 1 (50 aa).

Intrachain disulfides connect C3/C50, C14/C35, C20/C44, and C24/C46.

It belongs to the DEFL family.

The protein localises to the secreted. In terms of biological role, possesses antimicrobial activity sensitive to inorganic cations. Has no inhibitory effect on insect gut alpha-amylase. Induces potential changes in fungal membranes and increased K+ efflux and Ca(2+) uptake. Interacts with sphingolipids and ergosterols found in fungal plasma membranes. This chain is Defensin-like protein 1, found in Dahlia merckii (Bedding dahlia).